A 685-amino-acid polypeptide reads, in one-letter code: MKVFCGRVNPTTGAMDWVEEDEHYDYHQEIARSSYADMLHDKDRNEKYYQGICAAVRRVKQRGQEAVVLDIGTGTGLLSMMAVTAGADCCYAIEVFKPMSDAAVQIVKANGFSDKIKVINKHSTEVTVGPDGDMKTKANILITELFDTELIGEGALPSYEHAQHNLMQETWEAVPHRATVFAQLVESTRLWSWNKLFPLNLETGDIKPHPELETCPGAPSVCDIQLSQLNPRDFKILSEVLCVFRVDFSCQVSSAPTSHPVHFTSLASGAAQVVLSWWEIDMDPDGSITCTMQPSWMYETQQSVPWRDHWMQCVYFLPKECSVTQGEVCCLTAHQDDYCVWYSLNKSSAENDPVCRERPTCHCGAHITWNRARFGELNDRHRTQQYFEALKKVVTPSSTCLCVSDGSLLPVLAHSLGAKQIYTLESSSIAQHLMKKLFQVNHLGEKIQVLHKSADSLITADFEDRKISTLIGEPFFTTNLLPWHNLYFWYSRTALSTNLAKDCTVLPLSASLHVVAVEFKDLWRIRSPCGMCEGFDVSIMDKMIKNSLNFRESQEAEPHPLWEYPCRALSEPIQVMTFNFTEPVPTEEIRASGSLNLVRSGQCHGAVLWMVYELTKEITVSTGLIGISEEMGECQWYPHRKQGVYFFSSILNPQTIPAQSPSSVSYSVTFIPKEGDIRMCFEPDF.

2 consecutive SAM-dependent MTase PRMT-type domains span residues 14–341 (AMDW…YCVW) and 353–680 (PVCR…IRMC). Active-site residues include Glu144 and Glu153.

Belongs to the class I-like SAM-binding methyltransferase superfamily. Protein arginine N-methyltransferase family. PRMT7 subfamily.

The protein resides in the cytoplasm. Its subcellular location is the cytosol. It localises to the nucleus. It carries out the reaction L-arginyl-[protein] + S-adenosyl-L-methionine = N(omega)-methyl-L-arginyl-[protein] + S-adenosyl-L-homocysteine + H(+). In terms of biological role, arginine methyltransferase that can both catalyze the formation of omega-N monomethylarginine (MMA) and symmetrical dimethylarginine (sDMA), with a preference for the formation of MMA. Specifically mediates the symmetrical dimethylation of arginine residues in the small nuclear ribonucleoproteins Sm D1 (SNRPD1) and Sm D3 (SNRPD3); such methylation being required for the assembly and biogenesis of snRNP core particles. Specifically mediates the symmetric dimethylation of histone H4 'Arg-3' to form H4R3me2s. Plays a role in gene imprinting by being recruited by CTCFL at the H19 imprinted control region (ICR) and methylating histone H4 to form H4R3me2s, possibly leading to recruit DNA methyltransferases at these sites. May also play a role in embryonic stem cell (ESC) pluripotency. Also able to mediate the arginine methylation of histone H2A and myelin basic protein (MBP) in vitro; the relevance of such results is however unclear in vivo. The sequence is that of Protein arginine N-methyltransferase 7 (prmt7) from Xenopus laevis (African clawed frog).